A 258-amino-acid polypeptide reads, in one-letter code: 3-deoxy-manno-octulosonate cytidylyltransferase (258 aa).

It belongs to the KdsB family.

The protein localises to the cytoplasm. The enzyme catalyses 3-deoxy-alpha-D-manno-oct-2-ulosonate + CTP = CMP-3-deoxy-beta-D-manno-octulosonate + diphosphate. It functions in the pathway nucleotide-sugar biosynthesis; CMP-3-deoxy-D-manno-octulosonate biosynthesis; CMP-3-deoxy-D-manno-octulosonate from 3-deoxy-D-manno-octulosonate and CTP: step 1/1. It participates in bacterial outer membrane biogenesis; lipopolysaccharide biosynthesis. Activates KDO (a required 8-carbon sugar) for incorporation into bacterial lipopolysaccharide in Gram-negative bacteria. The sequence is that of 3-deoxy-manno-octulosonate cytidylyltransferase from Nitrobacter hamburgensis (strain DSM 10229 / NCIMB 13809 / X14).